The primary structure comprises 427 residues: ETS domain-containing protein Elk-1 (427 aa).

The ETS DNA-binding region spans 5 to 86 (VTLWQFLLQL…SGQKFVYKFV (82 aa)). 3 disordered regions span residues 116-146 (ATVH…GLAR), 166-202 (LQPQ…SPNP), and 226-252 (PNQK…VEGP). Glycyl lysine isopeptide (Lys-Gly) (interchain with G-Cter in SUMO) cross-links involve residues Lys229, Lys248, and Lys253. Polar residues predominate over residues 300–310 (STSTTEITQPQ). The tract at residues 300-350 (STSTTEITQPQKGRKPRDLELPLSPSLLGGQGPERTPGSGTSSGLQAQGPA) is disordered. Position 323 is a phosphoserine; by MAPK1 (Ser323). A phosphothreonine; by MAPK1 mark is found at Thr335, Thr352, Thr362, and Thr367. Residues 348 to 398 (GPALTPSLLPTHTLTPVLLTPSSLPPSIHFWSTLSPIAPRSPAKLSFQFPS) are sufficient for interaction with MAD2L2. Thr380 carries an O-linked (GlcNAc) threonine glycan. Ser382 is modified (phosphoserine; by MAPK1 and MAPK8). Ser388 bears the Phosphoserine; by MAPK1 mark. Thr416 is modified (phosphothreonine; by MAPK1). Position 421 is a phosphoserine; by MAPK1 (Ser421).

Belongs to the ETS family. As to quaternary structure, interacts in its sumoylated form with PIAS2/PIASX which enhances its transcriptional activator activity. Interacts with MAD2L2; the interaction is direct and promotes phosphorylation by the kinases MAPK8 and/or MAPK9. Interacts with POU1F1. Post-translationally, sumoylation represses transcriptional activator activity as it results in recruitment of HDAC2 to target gene promoters which leads to decreased histone acetylation and reduced transactivator activity. It also regulates nuclear retention. On mitogenic stimulation, phosphorylated on C-terminal serine and threonine residues by MAPK1. Ser-382 and Ser-388 are the preferred sites for MAPK1. In vitro, phosphorylation by MAPK1 potentiates ternary complex formation with the serum responses factors, SRE and SRF. Also phosphorylated on Ser-382 by MAPK8 and/or MAKP9. Phosphorylation leads to loss of sumoylation and restores transcriptional activator activity. Phosphorylated and activated by CAMK4, MAPK11, MAPK12 and MAPK14. Upon bFGF stimulus, phosphorylated by PAK1. Phosphorylated by PRP4K at Thr-416; phosphorylation activation ELK1 transcriptional activity.

It localises to the nucleus. In terms of biological role, transcription factor that binds to purine-rich DNA sequences. Forms a ternary complex with SRF and the ETS and SRF motifs of the serum response element (SRE) on the promoter region of immediate early genes such as FOS and IER2. Induces target gene transcription upon JNK and MAPK-signaling pathways stimulation. The polypeptide is ETS domain-containing protein Elk-1 (Rattus norvegicus (Rat)).